Consider the following 960-residue polypeptide: Collagenase ColA (960 aa).

An N-terminal signal peptide occupies residues 1 to 30; it reads MNKNLRFTQMMIGISTMALSFGSIQTQVSA. Positions 31–92 are excised as a propeptide; it reads EETAPYNILQ…KRDEIQLKQS (62 aa). An activator domain region spans residues 93–365; sequence YTLAELNKMP…AVEQMKTNYG (273 aa). The tract at residues 93-764 is S1 metalloprotease domain; it reads YTLAELNKMP…VFHGVATEEK (672 aa). The segment at 375–644 is catalytic subdomain; sequence DLQKIREEGK…MQQLIDNQDK (270 aa). Residue H500 coordinates Zn(2+). E501 is an active-site residue. Residues H504 and E532 each coordinate Zn(2+). The interval 652-764 is helper subdomain; that stretch reads NDYLIQHAPK…VFHGVATEEK (113 aa). The PKD domain occupies 768 to 849; that stretch reads TTIVNMNGPY…ESKEQTKVTV (82 aa). Over residues 836–845 the composition is skewed to basic and acidic residues; it reads SRGKESKEQT. The interval 836 to 859 is disordered; sequence SRGKESKEQTKVTVKQDPQTSESY. Polar residues predominate over residues 846–857; that stretch reads KVTVKQDPQTSE. Residues 852 to 960 form a collagen-binding domain region; sequence DPQTSESYEE…KNGEYSLLVK (109 aa).

It belongs to the peptidase M9B family. Collagenase subfamily. The cofactor is Ca(2+). Requires Zn(2+) as cofactor.

The protein resides in the secreted. It catalyses the reaction Digestion of native collagen in the triple helical region at Xaa-|-Gly bonds. With synthetic peptides, a preference is shown for Gly at P3 and P1', Pro and Ala at P2 and P2', and hydroxyproline, Ala or Arg at P3'.. In terms of biological role, acts as a true collagenase, which is highly active and efficiently targets native tropocollagen. In vitro, can also cleave gelatin and the synthetic peptide FALGPA (furylacryloyl-Leu-Gly-Pro-Ala). May contribute to bacterial virulence in endophthalmitis or opportunistic infections via collagen degradation in the host extracellular matrix (ECM). The sequence is that of Collagenase ColA from Bacillus cereus (strain ATCC 14579 / DSM 31 / CCUG 7414 / JCM 2152 / NBRC 15305 / NCIMB 9373 / NCTC 2599 / NRRL B-3711).